Reading from the N-terminus, the 175-residue chain is Ribosome maturation factor RimM (175 aa).

Positions 95–175 (EEGDYYWHDL…TITVDWDAGF (81 aa)) constitute a PRC barrel domain.

Belongs to the RimM family. As to quaternary structure, binds ribosomal protein uS19.

The protein resides in the cytoplasm. Its function is as follows. An accessory protein needed during the final step in the assembly of 30S ribosomal subunit, possibly for assembly of the head region. Essential for efficient processing of 16S rRNA. May be needed both before and after RbfA during the maturation of 16S rRNA. It has affinity for free ribosomal 30S subunits but not for 70S ribosomes. The polypeptide is Ribosome maturation factor RimM (Glaesserella parasuis serovar 5 (strain SH0165) (Haemophilus parasuis)).